The primary structure comprises 152 residues: Small ribosomal subunit protein uS15 (152 aa).

Over residues 1–10 the composition is skewed to basic residues; that stretch reads MAKMHTRTKG. Residues 1 to 26 form a disordered region; it reads MAKMHTRTKGKSGSTKPIRSESPAWS. Polar residues predominate over residues 11-26; the sequence is KSGSTKPIRSESPAWS.

Belongs to the universal ribosomal protein uS15 family. Part of the 30S ribosomal subunit.

The chain is Small ribosomal subunit protein uS15 from Methanococcoides burtonii (strain DSM 6242 / NBRC 107633 / OCM 468 / ACE-M).